The primary structure comprises 210 residues: LexA repressor (210 aa).

Positions 25–44 (AGQVAQEVGITKQAISQQVN) form a DNA-binding region, H-T-H motif. Catalysis depends on for autocatalytic cleavage activity residues serine 120 and lysine 159.

Belongs to the peptidase S24 family. In terms of assembly, homodimer.

It catalyses the reaction Hydrolysis of Ala-|-Gly bond in repressor LexA.. In terms of biological role, represses a number of genes involved in the response to DNA damage (SOS response), including recA and lexA. In the presence of single-stranded DNA, RecA interacts with LexA causing an autocatalytic cleavage which disrupts the DNA-binding part of LexA, leading to derepression of the SOS regulon and eventually DNA repair. This is LexA repressor from Deinococcus radiodurans (strain ATCC 13939 / DSM 20539 / JCM 16871 / CCUG 27074 / LMG 4051 / NBRC 15346 / NCIMB 9279 / VKM B-1422 / R1).